The following is a 339-amino-acid chain: Dihydroorotate dehydrogenase (quinone) (339 aa).

Residues 62 to 66 (AGMDK) and T86 each bind FMN. K66 lines the substrate pocket. Substrate is bound at residue 111 to 115 (NRMGF). N139 and N172 together coordinate FMN. A substrate-binding site is contributed by N172. S175 (nucleophile) is an active-site residue. N177 is a binding site for substrate. The FMN site is built by K217 and T245. Residue 246–247 (NT) coordinates substrate. Residues G268, G297, and 318–319 (YS) contribute to the FMN site.

This sequence belongs to the dihydroorotate dehydrogenase family. Type 2 subfamily. Monomer. The cofactor is FMN.

The protein localises to the cell membrane. It carries out the reaction (S)-dihydroorotate + a quinone = orotate + a quinol. It participates in pyrimidine metabolism; UMP biosynthesis via de novo pathway; orotate from (S)-dihydroorotate (quinone route): step 1/1. Its function is as follows. Catalyzes the conversion of dihydroorotate to orotate with quinone as electron acceptor. This is Dihydroorotate dehydrogenase (quinone) from Shewanella piezotolerans (strain WP3 / JCM 13877).